Reading from the N-terminus, the 1178-residue chain is DNA-directed RNA polymerase subunit beta (1178 aa).

Belongs to the RNA polymerase beta chain family. The RNAP catalytic core consists of 2 alpha, 1 beta, 1 beta' and 1 omega subunit. When a sigma factor is associated with the core the holoenzyme is formed, which can initiate transcription.

The catalysed reaction is RNA(n) + a ribonucleoside 5'-triphosphate = RNA(n+1) + diphosphate. In terms of biological role, DNA-dependent RNA polymerase catalyzes the transcription of DNA into RNA using the four ribonucleoside triphosphates as substrates. The chain is DNA-directed RNA polymerase subunit beta from Treponema pallidum (strain Nichols).